The primary structure comprises 399 residues: S-adenosylmethionine synthase (399 aa).

His-16 serves as a coordination point for ATP. Asp-18 serves as a coordination point for Mg(2+). Glu-44 contacts K(+). L-methionine is bound by residues Glu-57 and Gln-100. Positions 100–110 (QSPDIAQGVDD) are flexible loop. Residues 174–176 (DAK), 241–242 (RF), Asp-250, 256–257 (RK), Ala-273, and Lys-277 each bind ATP. An L-methionine-binding site is contributed by Asp-250. Lys-281 contributes to the L-methionine binding site.

It belongs to the AdoMet synthase family. Homotetramer; dimer of dimers. Mg(2+) is required as a cofactor. Requires K(+) as cofactor.

It localises to the cytoplasm. The catalysed reaction is L-methionine + ATP + H2O = S-adenosyl-L-methionine + phosphate + diphosphate. The protein operates within amino-acid biosynthesis; S-adenosyl-L-methionine biosynthesis; S-adenosyl-L-methionine from L-methionine: step 1/1. In terms of biological role, catalyzes the formation of S-adenosylmethionine (AdoMet) from methionine and ATP. The overall synthetic reaction is composed of two sequential steps, AdoMet formation and the subsequent tripolyphosphate hydrolysis which occurs prior to release of AdoMet from the enzyme. This chain is S-adenosylmethionine synthase, found in Latilactobacillus sakei subsp. sakei (strain 23K) (Lactobacillus sakei subsp. sakei).